The chain runs to 111 residues: Nucleoid-associated protein NGK_1136 (111 aa).

It belongs to the YbaB/EbfC family. Homodimer.

The protein resides in the cytoplasm. The protein localises to the nucleoid. Its function is as follows. Binds to DNA and alters its conformation. May be involved in regulation of gene expression, nucleoid organization and DNA protection. The polypeptide is Nucleoid-associated protein NGK_1136 (Neisseria gonorrhoeae (strain NCCP11945)).